The sequence spans 313 residues: Nucleoside diphosphate-linked moiety X motif 6 (313 aa).

Residues 138–270 (THQVGVAGAV…TSRVARLLLY (133 aa)) form the Nudix hydrolase domain.

It belongs to the Nudix hydrolase family. As to quaternary structure, monomer and homodimer.

The protein localises to the cytoplasm. The protein resides in the nucleus. Its subcellular location is the mitochondrion. In terms of biological role, may contribute to the regulation of cell proliferation. This chain is Nucleoside diphosphate-linked moiety X motif 6 (Nudt6), found in Mus musculus (Mouse).